Reading from the N-terminus, the 547-residue chain is Chaperonin GroEL (547 aa).

Residues Thr30–Pro33, Lys51, Asp87–Thr91, Gly415, and Asp496 each bind ATP.

This sequence belongs to the chaperonin (HSP60) family. As to quaternary structure, forms a cylinder of 14 subunits composed of two heptameric rings stacked back-to-back. Interacts with the co-chaperonin GroES.

It localises to the cytoplasm. The enzyme catalyses ATP + H2O + a folded polypeptide = ADP + phosphate + an unfolded polypeptide.. In terms of biological role, together with its co-chaperonin GroES, plays an essential role in assisting protein folding. The GroEL-GroES system forms a nano-cage that allows encapsulation of the non-native substrate proteins and provides a physical environment optimized to promote and accelerate protein folding. This Actinobacillus pleuropneumoniae serotype 7 (strain AP76) protein is Chaperonin GroEL.